Reading from the N-terminus, the 417-residue chain is Methyltransferase/ribosomally synthesized cyclic peptide omphalotin A precursor ophMA (417 aa).

Positions 1–251 (METSTQTKAG…GVSTFYIPPK (251 aa)) are methyltransferase domain. Catalysis depends on residues R72, Y76, and Y98. Residues Y98, H100, V103, A130, Q172, A213, S244, and T245 each contribute to the S-adenosyl-L-methionine site. Residues 252–378 (ARKASNLDII…WAIRCAMKNM (127 aa)) form a clasp domain region. The interval 379–399 (PSSLLDAARESGEEASQNGFP) is precursor leader. 3 positions are modified to N-methylvaline: V401, V403, and V404. An N-methylglycine modification is found at G405. V406 carries the N-methylvaline modification. At I407 the chain carries N-methylisoleucine. G408 carries the post-translational modification N-methylglycine. I410 is subject to N-methylisoleucine. G411 is modified (N-methylglycine). V413 is modified (N-methylvaline).

This sequence in the N-terminal section; belongs to the precorrin methyltransferase family. In terms of assembly, homodimer. OphMA automethylates at Val-401, Val-403, Val-404, Gly-405, Val-406, Ile-407, Gly-408, Ile-410, Gly-411 and Val-413 before being processed by the prolyloligopeptidase ophP which likely forms a peptidyl ester upon removal of the follower propeptide, which then undergoes macrocyclization with the N-terminus of the modified core peptide. Peptide backbone alpha-N-methylations change the physicochemical properties of amide bonds to provide structural constraints and other favorable characteristics including biological membrane permeability to peptides.

It functions in the pathway mycotoxin biosynthesis. Fusion protein of the methyltransferase ophM and the omphalotin core peptide; part of the gene cluster that mediates the biosynthesis of omphalotin A, a highly methylated cyclic dodecapeptide with nematodicidal activity. Omphalotin A derives from the C-terminus of the ophMA protein, and it is the ophMA protein that methylates its own C-terminus using S-adenosyl methionine (SAM). The C-terminus is subsequently cleaved off and macrocyclized by the prolyloligopeptidase ophP to give the final product. This is Methyltransferase/ribosomally synthesized cyclic peptide omphalotin A precursor ophMA from Omphalotus olearius (Jack o'lantern).